Consider the following 239-residue polypeptide: Probable transcriptional regulatory protein BCAH187_A0615 (239 aa).

This sequence belongs to the TACO1 family. YeeN subfamily.

The protein resides in the cytoplasm. The chain is Probable transcriptional regulatory protein BCAH187_A0615 from Bacillus cereus (strain AH187).